A 95-amino-acid polypeptide reads, in one-letter code: UPF0473 protein BPUM_2377 (95 aa).

This sequence belongs to the UPF0473 family.

The sequence is that of UPF0473 protein BPUM_2377 from Bacillus pumilus (strain SAFR-032).